Consider the following 156-residue polypeptide: Small ribosomal subunit protein uS7 (156 aa).

This sequence belongs to the universal ribosomal protein uS7 family. As to quaternary structure, part of the 30S ribosomal subunit. Contacts proteins S9 and S11.

In terms of biological role, one of the primary rRNA binding proteins, it binds directly to 16S rRNA where it nucleates assembly of the head domain of the 30S subunit. Is located at the subunit interface close to the decoding center, probably blocks exit of the E-site tRNA. In Methylibium petroleiphilum (strain ATCC BAA-1232 / LMG 22953 / PM1), this protein is Small ribosomal subunit protein uS7.